The following is a 449-amino-acid chain: uncharacterized protein (449 aa).

The 59-residue stretch at 3–61 (VWQQGATIELRIDSLSHTGEGVGRWQDRVVFVADTVPGDRLRVRLTHVKRQYAHGKVLE) folds into the TRAM domain. Residues Cys-74, Cys-80, Cys-83, and Cys-161 each coordinate [4Fe-4S] cluster. 4 residues coordinate S-adenosyl-L-methionine: Gln-283, Tyr-312, Glu-333, and Asp-378. Cys-405 acts as the Nucleophile in catalysis.

The protein belongs to the class I-like SAM-binding methyltransferase superfamily. RNA M5U methyltransferase family.

This is an uncharacterized protein from Thermosynechococcus vestitus (strain NIES-2133 / IAM M-273 / BP-1).